Here is a 132-residue protein sequence, read N- to C-terminus: uncharacterized protein (132 aa).

This is an uncharacterized protein from Botryotinia fuckeliana (Noble rot fungus).